We begin with the raw amino-acid sequence, 120 residues long: Large ribosomal subunit protein bL19 (120 aa).

Belongs to the bacterial ribosomal protein bL19 family.

Its function is as follows. This protein is located at the 30S-50S ribosomal subunit interface and may play a role in the structure and function of the aminoacyl-tRNA binding site. In Dichelobacter nodosus (strain VCS1703A), this protein is Large ribosomal subunit protein bL19.